Reading from the N-terminus, the 500-residue chain is Sodium/potassium/calcium exchanger 5 (500 aa).

An N-terminal signal peptide occupies residues 1–29 (MQTKGGQTWARRALLLGILWATAHLPLSG). Residues 30–66 (TSLPQRLPRATGNSTQCVISPSSEFPEGFFTRQERRD) lie on the Extracellular side of the membrane. The helical transmembrane segment at 67-87 (GGIIIYFLIIVYMFMAISIVC) threads the bilayer. The Cytoplasmic portion of the chain corresponds to 88-111 (DEYFLPSLEIISESLGLSQDVAGT). The chain crosses the membrane as a helical span at residues 112–132 (TFMAAGSSAPELVTAFLGVFI). Over 133-136 (TKGD) the chain is Extracellular. Residues 137 to 157 (IGISTILGSAIYNLLGICAAC) traverse the membrane as a helical segment. Topologically, residues 158-169 (GLLSNTVSTLSC) are cytoplasmic. A helical transmembrane segment spans residues 170–190 (WPLFRDCAAYTISAAAVLGII). The Extracellular segment spans residues 191–195 (YDNQV). The helical transmembrane segment at 196–216 (YWYEGALLLLIYGLYVLVLCF) threads the bilayer. Residues 217-302 (DIKINQYIIK…PSVFNMPEAD (86 aa)) lie on the Cytoplasmic side of the membrane. Residues 303-323 (LKRIFWVLSLPIITLLFLTTP) traverse the membrane as a helical segment. At 324-333 (DCRKKFWKNY) the chain is on the extracellular side. A helical membrane pass occupies residues 334 to 354 (FVITFFMSAIWISAFTYILVW). Residues 355–368 (MVTITGETLEIPDT) are Cytoplasmic-facing. A helical membrane pass occupies residues 369 to 389 (VMGLTLLAAGTSIPDTIASVL). The Extracellular portion of the chain corresponds to 390–399 (VARKGKGDMA). The helical transmembrane segment at 400-420 (MSNIVGSNVFDMLCLGIPWFI) threads the bilayer. Topologically, residues 421 to 437 (KTAFINGSAPAEVNSRG) are cytoplasmic. Residues 438 to 458 (LTYITISLNISIIFLFLAVHF) form a helical membrane-spanning segment. Topologically, residues 459–468 (NGWKLDRKLG) are extracellular. Residues 469-489 (IVCLLSYLGLATLSVLYELGI) form a helical membrane-spanning segment. The Cytoplasmic segment spans residues 490 to 500 (IGNNKIRGCGG).

It belongs to the Ca(2+):cation antiporter (CaCA) (TC 2.A.19) family. SLC24A subfamily.

It localises to the golgi apparatus. Its subcellular location is the trans-Golgi network membrane. It is found in the melanosome. The enzyme catalyses Ca(2+)(out) + K(+)(out) + 4 Na(+)(in) = Ca(2+)(in) + K(+)(in) + 4 Na(+)(out). Calcium, potassium:sodium antiporter that transports 1 Ca(2+) and 1 K(+) to the melanosome in exchange for 4 cytoplasmic Na(+). Involved in pigmentation, possibly by participating in ion transport in melanosomes. Predominant sodium-calcium exchanger in melanocytes. This Homo sapiens (Human) protein is Sodium/potassium/calcium exchanger 5.